Reading from the N-terminus, the 357-residue chain is DNA primase small subunit PriS (357 aa).

Active-site residues include D105, D107, and D259.

Belongs to the eukaryotic-type primase small subunit family. As to quaternary structure, heterodimer of a small subunit (PriS) and a large subunit (PriL). Requires Mg(2+) as cofactor. The cofactor is Mn(2+).

In terms of biological role, catalytic subunit of DNA primase, an RNA polymerase that catalyzes the synthesis of short RNA molecules used as primers for DNA polymerase during DNA replication. The small subunit contains the primase catalytic core and has DNA synthesis activity on its own. Binding to the large subunit stabilizes and modulates the activity, increasing the rate of DNA synthesis while decreasing the length of the DNA fragments, and conferring RNA synthesis capability. The DNA polymerase activity may enable DNA primase to also catalyze primer extension after primer synthesis. May also play a role in DNA repair. The polypeptide is DNA primase small subunit PriS (Methanococcus maripaludis (strain DSM 14266 / JCM 13030 / NBRC 101832 / S2 / LL)).